The following is a 279-amino-acid chain: 3-methyl-2-oxobutanoate hydroxymethyltransferase (279 aa).

Residues D43 and D82 each contribute to the Mg(2+) site. Residues 43–44 (DS), D82, and K112 contribute to the 3-methyl-2-oxobutanoate site. Residue E114 coordinates Mg(2+). Catalysis depends on E181, which acts as the Proton acceptor.

This sequence belongs to the PanB family. Homodecamer; pentamer of dimers. It depends on Mg(2+) as a cofactor.

The protein localises to the cytoplasm. It catalyses the reaction 3-methyl-2-oxobutanoate + (6R)-5,10-methylene-5,6,7,8-tetrahydrofolate + H2O = 2-dehydropantoate + (6S)-5,6,7,8-tetrahydrofolate. It functions in the pathway cofactor biosynthesis; (R)-pantothenate biosynthesis; (R)-pantoate from 3-methyl-2-oxobutanoate: step 1/2. Its function is as follows. Catalyzes the reversible reaction in which hydroxymethyl group from 5,10-methylenetetrahydrofolate is transferred onto alpha-ketoisovalerate to form ketopantoate. The chain is 3-methyl-2-oxobutanoate hydroxymethyltransferase from Geobacillus thermodenitrificans (strain NG80-2).